Here is a 629-residue protein sequence, read N- to C-terminus: DNA-directed RNA polymerase subunit beta' (629 aa).

Residues C70, C72, C85, and C88 each coordinate Zn(2+). Residues D472, D474, and D476 each coordinate Mg(2+).

It belongs to the RNA polymerase beta' chain family. RpoC1 subfamily. In plastids the minimal PEP RNA polymerase catalytic core is composed of four subunits: alpha, beta, beta', and beta''. When a (nuclear-encoded) sigma factor is associated with the core the holoenzyme is formed, which can initiate transcription. Mg(2+) serves as cofactor. Requires Zn(2+) as cofactor.

The protein localises to the plastid. The protein resides in the chloroplast. It catalyses the reaction RNA(n) + a ribonucleoside 5'-triphosphate = RNA(n+1) + diphosphate. DNA-dependent RNA polymerase catalyzes the transcription of DNA into RNA using the four ribonucleoside triphosphates as substrates. The polypeptide is DNA-directed RNA polymerase subunit beta' (Porphyra purpurea (Red seaweed)).